A 308-amino-acid polypeptide reads, in one-letter code: tRNA pseudouridine synthase B (308 aa).

The active-site Nucleophile is the Asp-44.

It belongs to the pseudouridine synthase TruB family. Type 1 subfamily.

It catalyses the reaction uridine(55) in tRNA = pseudouridine(55) in tRNA. In terms of biological role, responsible for synthesis of pseudouridine from uracil-55 in the psi GC loop of transfer RNAs. The polypeptide is tRNA pseudouridine synthase B (Nitratidesulfovibrio vulgaris (strain DSM 19637 / Miyazaki F) (Desulfovibrio vulgaris)).